Here is a 699-residue protein sequence, read N- to C-terminus: Methylcrotonoyl-CoA carboxylase subunit alpha, mitochondrial (699 aa).

The Biotin carboxylation domain occupies 30 to 475 (ITKILIANRG…ETGFIPIHRE (446 aa)). The ATP site is built by Lys144, Glu228, and His263. The 198-residue stretch at 148-345 (KDIMIKAGVP…LVEWQLKVAE (198 aa)) folds into the ATP-grasp domain. Residue Arg320 is part of the active site. The region spanning 624–699 (KGADGVLGSL…EDKKTLAVIV (76 aa)) is the Biotinyl-binding domain. Lys665 carries the post-translational modification N6-biotinyllysine.

In terms of assembly, probably a dodecamer composed of six biotin-containing alpha subunits and six beta subunits. The cofactor is Mn(2+). Biotin is required as a cofactor.

It is found in the mitochondrion matrix. It carries out the reaction 3-methylbut-2-enoyl-CoA + hydrogencarbonate + ATP = 3-methyl-(2E)-glutaconyl-CoA + ADP + phosphate + H(+). The protein operates within amino-acid degradation; L-leucine degradation; (S)-3-hydroxy-3-methylglutaryl-CoA from 3-isovaleryl-CoA: step 2/3. Biotin-attachment subunit of the 3-methylcrotonyl-CoA carboxylase, an enzyme that catalyzes the conversion of 3-methylcrotonyl-CoA to 3-methylglutaconyl-CoA, a critical step for leucine and isovaleric acid catabolism. This Dictyostelium discoideum (Social amoeba) protein is Methylcrotonoyl-CoA carboxylase subunit alpha, mitochondrial (mccA).